Consider the following 579-residue polypeptide: Vitamin B6 transporter TPN1 (579 aa).

Residues 1–98 (MNRDNMDTTK…LHVAGLWLSA (98 aa)) lie on the Cytoplasmic side of the membrane. The chain crosses the membrane as a helical span at residues 99-119 (TGGLSSMSSFLLGPLLFGLSF). Residues 120 to 122 (RES) lie on the Extracellular side of the membrane. The helical transmembrane segment at 123–143 (VASSLISVTIGCLIAAYCSIM) threads the bilayer. Topologically, residues 144-157 (GPQSGCRQMVTARY) are cytoplasmic. Residues 158–178 (LFGWWFVKLVALASIIGVMGW) form a helical membrane-spanning segment. The Extracellular portion of the chain corresponds to 179–198 (SVVNSVVGGEMLAAISNDKV). A helical membrane pass occupies residues 199-219 (PLWVGIVIVTVCSFLVAIFGI). Residues 220 to 221 (KQ) lie on the Cytoplasmic side of the membrane. Residues 222–242 (VIKVETYLSVPVLTAFLLLYI) form a helical membrane-spanning segment. At 243 to 274 (SSSDKYSFVNAYVSKGNLDSSTRKGNWMSFFS) the chain is on the extracellular side. The helical transmembrane segment at 275-295 (LCYSITATWGSITADYYILFP) threads the bilayer. Topologically, residues 296–302 (EDTPYIQ) are cytoplasmic. Residues 303-323 (IFCLTFFGTFLPTCFVGILGL) form a helical membrane-spanning segment. Topologically, residues 324-362 (LLASVAMSYKPWSVEYDSHGMGGLLWAGFQRWNGFGKFC) are extracellular. A helical membrane pass occupies residues 363-383 (VVVLVFSLVSNNIINTYSAAF). At 384 to 394 (SIQLSSVFCAK) the chain is on the cytoplasmic side. The helical transmembrane segment at 395 to 415 (IPRWFWSIVCTIICLVCALIG) threads the bilayer. Residues 416-421 (RNHFST) lie on the Extracellular side of the membrane. A helical membrane pass occupies residues 422 to 442 (ILGNFLPMIGYWISMYFILLF). The Cytoplasmic portion of the chain corresponds to 443 to 519 (EENLVFRRFF…EVLTHGYAAT (77 aa)). A helical membrane pass occupies residues 520–540 (FAFIVGVAGVVVGMAQAYWIG). The Extracellular segment spans residues 541–545 (PIAAK). The chain crosses the membrane as a helical span at residues 546 to 566 (FGEYGGDVAMWLSMAFSGVVY). Residues 567 to 579 (PPCRYLELRKFGR) are Cytoplasmic-facing.

This sequence belongs to the purine-cytosine permease (2.A.39) family.

Its subcellular location is the membrane. Thiamine-regulated, high affinity import carrier of pyridoxine, pyridoxal and pyridoxamine. In Saccharomyces cerevisiae (strain ATCC 204508 / S288c) (Baker's yeast), this protein is Vitamin B6 transporter TPN1 (TPN1).